The following is a 215-amino-acid chain: Pyrrolidone-carboxylate peptidase (215 aa).

Catalysis depends on residues E80, C143, and H167.

The protein belongs to the peptidase C15 family. Homotetramer.

It localises to the cytoplasm. It carries out the reaction Release of an N-terminal pyroglutamyl group from a polypeptide, the second amino acid generally not being Pro.. Functionally, removes 5-oxoproline from various penultimate amino acid residues except L-proline. The protein is Pyrrolidone-carboxylate peptidase of Pectobacterium atrosepticum (strain SCRI 1043 / ATCC BAA-672) (Erwinia carotovora subsp. atroseptica).